We begin with the raw amino-acid sequence, 61 residues long: Probable tautomerase LMOf2365_2536 (61 aa).

P2 acts as the Proton acceptor; via imino nitrogen in catalysis.

It belongs to the 4-oxalocrotonate tautomerase family.

In Listeria monocytogenes serotype 4b (strain F2365), this protein is Probable tautomerase LMOf2365_2536.